The primary structure comprises 304 residues: Acetyl-coenzyme A carboxylase carboxyl transferase subunit beta (304 aa).

One can recognise a CoA carboxyltransferase N-terminal domain in the interval 23-292 (VWTKCDSCGQ…PNPEAPREGV (270 aa)). Residues C27, C30, C46, and C49 each contribute to the Zn(2+) site. A C4-type zinc finger spans residues 27 to 49 (CDSCGQVLYRAELERNLEVCPKC). The segment at 284–304 (NPEAPREGVVVPPVPDQEPEA) is disordered. Pro residues predominate over residues 295–304 (PPVPDQEPEA).

It belongs to the AccD/PCCB family. In terms of assembly, acetyl-CoA carboxylase is a heterohexamer composed of biotin carboxyl carrier protein (AccB), biotin carboxylase (AccC) and two subunits each of ACCase subunit alpha (AccA) and ACCase subunit beta (AccD). Zn(2+) is required as a cofactor.

It localises to the cytoplasm. It carries out the reaction N(6)-carboxybiotinyl-L-lysyl-[protein] + acetyl-CoA = N(6)-biotinyl-L-lysyl-[protein] + malonyl-CoA. It participates in lipid metabolism; malonyl-CoA biosynthesis; malonyl-CoA from acetyl-CoA: step 1/1. Component of the acetyl coenzyme A carboxylase (ACC) complex. Biotin carboxylase (BC) catalyzes the carboxylation of biotin on its carrier protein (BCCP) and then the CO(2) group is transferred by the transcarboxylase to acetyl-CoA to form malonyl-CoA. In Shigella boydii serotype 18 (strain CDC 3083-94 / BS512), this protein is Acetyl-coenzyme A carboxylase carboxyl transferase subunit beta.